The following is a 307-amino-acid chain: Aspartate carbamoyltransferase catalytic subunit (307 aa).

Carbamoyl phosphate contacts are provided by arginine 51 and threonine 52. Lysine 80 lines the L-aspartate pocket. Carbamoyl phosphate contacts are provided by arginine 101, histidine 129, and glutamine 132. L-aspartate is bound by residues arginine 162 and arginine 225. Leucine 264 and proline 265 together coordinate carbamoyl phosphate.

This sequence belongs to the aspartate/ornithine carbamoyltransferase superfamily. ATCase family. In terms of assembly, heterododecamer (2C3:3R2) of six catalytic PyrB chains organized as two trimers (C3), and six regulatory PyrI chains organized as three dimers (R2).

It carries out the reaction carbamoyl phosphate + L-aspartate = N-carbamoyl-L-aspartate + phosphate + H(+). Its pathway is pyrimidine metabolism; UMP biosynthesis via de novo pathway; (S)-dihydroorotate from bicarbonate: step 2/3. Catalyzes the condensation of carbamoyl phosphate and aspartate to form carbamoyl aspartate and inorganic phosphate, the committed step in the de novo pyrimidine nucleotide biosynthesis pathway. In Lachnoclostridium phytofermentans (strain ATCC 700394 / DSM 18823 / ISDg) (Clostridium phytofermentans), this protein is Aspartate carbamoyltransferase catalytic subunit.